A 113-amino-acid polypeptide reads, in one-letter code: rRNA-processing protein cgrA (113 aa).

The span at 1 to 15 shows a compositional bias: polar residues; the sequence is MSTITTSSVASSNGM. Positions 1–113 are disordered; the sequence is MSTITTSSVA…REKRNKLLHS (113 aa). The stretch at 37 to 100 forms a coiled coil; that stretch reads SYEKRLEARK…EKMHRKRVER (64 aa). Residues 38–92 show a composition bias toward basic and acidic residues; that stretch reads YEKRLEARKLQEAVKEHEREMREEREAERKAQIQKIKDRRAAKEEKERYEKMAEK. Over residues 93 to 113 the composition is skewed to basic residues; that stretch reads MHRKRVERLKRREKRNKLLHS.

It belongs to the CGR1 family.

The protein localises to the nucleus. It localises to the nucleolus. Functionally, involved in nucleolar integrity and required for processing of the pre-rRNA for the 60S ribosome subunit. This is rRNA-processing protein cgrA (cgrA) from Aspergillus clavatus (strain ATCC 1007 / CBS 513.65 / DSM 816 / NCTC 3887 / NRRL 1 / QM 1276 / 107).